Consider the following 256-residue polypeptide: uncharacterized protein (256 aa).

7 helical membrane passes run 32–52 (ILASIFIGFGITAASKTGSYF), 59–79 (FAFPAAAVTFGAAILMIAYGG), 112–132 (YAGNLIGAILFAILISATGLF), 156–176 (LFFRGMLCNWLVCLAFFIPMS), 184–204 (LFTMMLFVFCFFISGFEHSIA), 207–227 (CTFAISLLIEHPDTVTLMGAV), and 230–250 (LIPVTLGNLTAGIVMMGWMYY).

This sequence belongs to the FNT transporter (TC 1.A.16) family.

It localises to the cell membrane. This is an uncharacterized protein from Bacillus subtilis (strain 168).